Reading from the N-terminus, the 326-residue chain is GTP 3',8-cyclase (326 aa).

Positions G7–R232 constitute a Radical SAM core domain. Residue R16 participates in GTP binding. [4Fe-4S] cluster contacts are provided by C23 and C27. Residue Y29 coordinates S-adenosyl-L-methionine. Residue C30 coordinates [4Fe-4S] cluster. R65 provides a ligand contact to GTP. G69 is an S-adenosyl-L-methionine binding site. T96 contributes to the GTP binding site. S120 lines the S-adenosyl-L-methionine pocket. K157 contributes to the GTP binding site. M191 contributes to the S-adenosyl-L-methionine binding site. [4Fe-4S] cluster-binding residues include C254 and C257. R259–R261 is a GTP binding site. C271 is a binding site for [4Fe-4S] cluster.

Belongs to the radical SAM superfamily. MoaA family. In terms of assembly, monomer and homodimer. The cofactor is [4Fe-4S] cluster.

The catalysed reaction is GTP + AH2 + S-adenosyl-L-methionine = (8S)-3',8-cyclo-7,8-dihydroguanosine 5'-triphosphate + 5'-deoxyadenosine + L-methionine + A + H(+). It functions in the pathway cofactor biosynthesis; molybdopterin biosynthesis. In terms of biological role, catalyzes the cyclization of GTP to (8S)-3',8-cyclo-7,8-dihydroguanosine 5'-triphosphate. This chain is GTP 3',8-cyclase, found in Stenotrophomonas maltophilia (strain R551-3).